A 182-amino-acid chain; its full sequence is Large ribosomal subunit protein uL6 (182 aa).

Belongs to the universal ribosomal protein uL6 family. Part of the 50S ribosomal subunit.

Its function is as follows. This protein binds to the 23S rRNA, and is important in its secondary structure. It is located near the subunit interface in the base of the L7/L12 stalk, and near the tRNA binding site of the peptidyltransferase center. The chain is Large ribosomal subunit protein uL6 from Dehalococcoides mccartyi (strain ATCC BAA-2266 / KCTC 15142 / 195) (Dehalococcoides ethenogenes (strain 195)).